We begin with the raw amino-acid sequence, 433 residues long: ATP-dependent protease ATPase subunit HslU (433 aa).

Residues Val18, Gly60–Glu65, Asp246, Glu311, and Arg383 each bind ATP.

It belongs to the ClpX chaperone family. HslU subfamily. As to quaternary structure, a double ring-shaped homohexamer of HslV is capped on each side by a ring-shaped HslU homohexamer. The assembly of the HslU/HslV complex is dependent on binding of ATP.

The protein resides in the cytoplasm. ATPase subunit of a proteasome-like degradation complex; this subunit has chaperone activity. The binding of ATP and its subsequent hydrolysis by HslU are essential for unfolding of protein substrates subsequently hydrolyzed by HslV. HslU recognizes the N-terminal part of its protein substrates and unfolds these before they are guided to HslV for hydrolysis. The chain is ATP-dependent protease ATPase subunit HslU from Nitrobacter hamburgensis (strain DSM 10229 / NCIMB 13809 / X14).